The primary structure comprises 600 residues: Threonine dehydratase, mitochondrial (600 aa).

Lys-144 bears the N6-(pyridoxal phosphate)lysine mark. ACT-like domains lie at 425–497 and 519–590; these read VFLS…DISD and RLYR…DETN.

This sequence belongs to the serine/threonine dehydratase family. Homotetramer. Requires pyridoxal 5'-phosphate as cofactor.

The protein localises to the mitochondrion. It is found in the cytoplasm. The enzyme catalyses L-threonine = 2-oxobutanoate + NH4(+). It participates in amino-acid biosynthesis; L-isoleucine biosynthesis; 2-oxobutanoate from L-threonine: step 1/1. Isoleucine allosterically inhibits while valine allosterically activates this enzyme. The polypeptide is Threonine dehydratase, mitochondrial (Schizosaccharomyces pombe (strain 972 / ATCC 24843) (Fission yeast)).